Here is an 89-residue protein sequence, read N- to C-terminus: Small ribosomal subunit protein uS14 (89 aa).

It belongs to the universal ribosomal protein uS14 family. Part of the 30S ribosomal subunit. Contacts proteins S3 and S10.

Functionally, binds 16S rRNA, required for the assembly of 30S particles and may also be responsible for determining the conformation of the 16S rRNA at the A site. The sequence is that of Small ribosomal subunit protein uS14 from Pelodictyon phaeoclathratiforme (strain DSM 5477 / BU-1).